A 391-amino-acid polypeptide reads, in one-letter code: Ribonuclease 3-like protein 2 (391 aa).

The short motif at 7-26 is the Nuclear export signal element; the sequence is PEYNFPAITRCSLSNSLPHR. Positions 60–203 constitute an RNase III domain; the sequence is MEAVEKILNY…LAGAVYVDVN (144 aa). Residues E96, D189, and E192 each coordinate Mg(2+). 2 consecutive DRBM domains span residues 218-294 and 313-387; these read EPIV…KLSE and HAKT…ALRK. Cysteines 240 and 322 form a disulfide. A Bipartite nuclear localization motif is present at residues 371 to 387; it reads KKAESSSAYHMIRALRK.

Homodimer; disulfide-linked. Requires Mg(2+) as cofactor. Mn(2+) is required as a cofactor. As to expression, expressed in seeds, leaves and flower buds.

Its subcellular location is the nucleus. The protein localises to the cytoplasm. Ribonuclease that cleaves double-stranded RNA (dsRNA). Required for 3'-external transcribed spacer (ETS) cleavage of the pre-rRNA precursors. May promote the production of 21 nucleotide small interfering RNA (siRNA) during post-transcriptional gene silencing (PTGS). This is Ribonuclease 3-like protein 2 (RTL2) from Arabidopsis thaliana (Mouse-ear cress).